The chain runs to 385 residues: Elsinochromes biosynthesis cluster protein HP2 (385 aa).

The signal sequence occupies residues 1 to 22; it reads MVLLYILIMVALIPMYMTVVQD. A run of 2 helical transmembrane segments spans residues 94–114 and 148–168; these read TVLS…SMFD and FYGQ…IVLW. Residue Asn187 is glycosylated (N-linked (GlcNAc...) asparagine). Residues 209–229 form a helical membrane-spanning segment; that stretch reads SWTFGQIVPIVLLVSPLVAAF. N-linked (GlcNAc...) asparagine glycosylation occurs at Asn248. The next 2 membrane-spanning stretches (helical) occupy residues 309 to 329 and 344 to 364; these read AILF…LPLA and YYAF…AVPF.

The protein resides in the membrane. Functionally, part of the gene cluster that mediates the biosynthesis of elsinochromes, pigments consisting of at least four interconvertible tautomers (A, B, C and D) that have a core phenolic quinone to which various side chains are attached and which play an important role in fungal pathogenesis. The non-reducing polyketide synthase PKS1 was proposed to iteratively catalyze decarboxylation between acetyl-CoA and malonyl-CoA subunits for polyketide chain elongation. The released polyketide undergoes cyclization to form an aromatic ring, and proceeds via serial modification steps to produce the heptaketide back- bone of elsinochrome. As elsinochrome has a symmetrical structure, two identical heptaketides are fused to form a core 1,2-dihydrobenzo-perylene ring structure, which can then be successively modified to produce the various derivatives of elsinochrome. Some of these reactions may be cooperatively carried out, at least in part, by the products of RDT1, OXR1 and PKS1. PRF1, embedded within the elsinochrome cluster possibly functions to stabilize some of the biosynthetic enzymes required for elsinochrome production. As prefoldin is a hexamer containing 2 a and 4 b subunits, additional prefoldin subunits, whose coding genes may not immediately link to the elsinochrome biosynthetic gene cluster, are required to fulfill the chaperone function. In addition, no methyltransferase-coding gene exists within the biosynthetic gene cluster, even though elsinochrome has four methyl groups at positions C3, C7, C8 and C12. Apparently, the identified gene cluster does not contain the entire entourage of genes responsible for elsinochrome biosynthesis. Once elsinochrome is synthesized, it must be exported outside the fungal cells, which is probably accomplished by the ECT1 transporter, to avoid toxicity. The polypeptide is Elsinochromes biosynthesis cluster protein HP2 (Elsinoe fawcettii (Citrus scab fungus)).